The chain runs to 601 residues: Probable Xaa-Pro aminopeptidase P (601 aa).

Mn(2+) is bound by residues Asp-398, Asp-409, Glu-507, and Glu-521.

This sequence belongs to the peptidase M24B family. The cofactor is Mn(2+).

It carries out the reaction Release of any N-terminal amino acid, including proline, that is linked to proline, even from a dipeptide or tripeptide.. Its function is as follows. Catalyzes the removal of a penultimate prolyl residue from the N-termini of peptides. This is Probable Xaa-Pro aminopeptidase P (ampp) from Sclerotinia sclerotiorum (strain ATCC 18683 / 1980 / Ss-1) (White mold).